A 452-amino-acid polypeptide reads, in one-letter code: Dimethyladenosine transferase 2, mitochondrial (452 aa).

S-adenosyl-L-methionine is bound by residues isoleucine 46, glutamate 99, and aspartate 125. The interval 408–452 (ANDEPNLEDGVTLPEEDDAEADEIIEEESPVPATTPVKRRRKASS) is disordered. Acidic residues predominate over residues 421–436 (PEEDDAEADEIIEEES).

Belongs to the class I-like SAM-binding methyltransferase superfamily. rRNA adenine N(6)-methyltransferase family. KsgA subfamily.

It localises to the mitochondrion. In terms of biological role, probable S-adenosyl-L-methionine-dependent methyltransferase which specifically dimethylates mitochondrial 12S rRNA at the conserved stem loop. Also required for basal transcription of mitochondrial DNA. Also regulates mitochondrial DNA copy number. Stimulates transcription independently of the methyltransferase activity. The polypeptide is Dimethyladenosine transferase 2, mitochondrial (mtTFB2) (Drosophila melanogaster (Fruit fly)).